A 153-amino-acid polypeptide reads, in one-letter code: Large ribosomal subunit protein uL13 (153 aa).

It belongs to the universal ribosomal protein uL13 family. In terms of assembly, part of the 50S ribosomal subunit.

This protein is one of the early assembly proteins of the 50S ribosomal subunit, although it is not seen to bind rRNA by itself. It is important during the early stages of 50S assembly. This is Large ribosomal subunit protein uL13 from Methylobacterium sp. (strain 4-46).